The sequence spans 1333 residues: snRNA-activating protein complex subunit 4 (1333 aa).

Residues 29–84 (HFEVSESSLSSDSEADSLPDEDLETAGAPILEEEGSSESSNDEEDPKDKALPEDPE) are disordered. 2 stretches are compositionally biased toward acidic residues: residues 41–52 (SEADSLPDEDLE) and 59–73 (LEEEGSSESSNDEED). Residue Ser68 is modified to Phosphoserine. The SNAPC5-binding stretch occupies residues 84–133 (ETCLQLNMVYQEVIREKLAEVSQLLAQNQEQQEEILFDLSGTKCPKVKDG). Positions 250–288 (EEALLGNRLDSHDWEKISNINFEGARSAEEIRKFWQSSE) constitute a Myb-like 1 domain. Residues 289 to 343 (HPSISKQEWSTEEVERLKAIAATHGHLEWHLVAEELGTSRSAFQCLQKFQQYNKT) enclose the HTH myb-type 1 domain. The H-T-H motif DNA-binding region spans 317–341 (WHLVAEELGTSRSAFQCLQKFQQYN). The 52-residue stretch at 344 to 395 (LKRKEWTEEEDHMLTQLVQEMRVGNHIPYRKIVYFMEGRDSMQLIYRWTKSL) folds into the Myb-like 2 domain. 2 HTH myb-type domains span residues 396 to 451 (DPSL…HFSL) and 452 to 503 (KKGR…RKKQ). 2 consecutive DNA-binding regions (H-T-H motif) follow at residues 424-447 (WFKIREEVPGRSDAQCRDRYIRRL) and 476-499 (WARIASELPHRSGSQCLSKWKILA). Basic residues predominate over residues 503–515 (QHLQRKRGQRPRH). 4 disordered regions span residues 503–558 (QHLQ…LEKS), 662–702 (LMKE…QNKQ), 811–842 (NAKNNTGCLPSMTGEQTAKRASHKGRPRLGSC), and 1079–1117 (LPSPAKTPAFLEQPPASTDTEPKGPQGQEIPPTPGPEKA). Over residues 516-546 (SSQWSSSGSSSSSSEDYGSSSGSDGSSGSEN) the composition is skewed to low complexity. Composition is skewed to polar residues over residues 672-686 (LPSSRSGSDPGNNTA) and 811-826 (NAKNNTGCLPSMTGEQ). The tract at residues 1131–1247 (AIVTWLKGCQ…NSIPTTLSPD (117 aa)) is SNAPC2-binding. Phosphoserine occurs at positions 1252, 1254, 1301, and 1309. Positions 1282 to 1333 (PAAPDPVQSHLVSPGQRAPSPGEVSAPSPLDASDGLDDLNVLRTRRARHSRR) are disordered. Residues 1324 to 1333 (RTRRARHSRR) are compositionally biased toward basic residues.

As to quaternary structure, part of the SNAPc composed of 5 subunits: SNAPC1, SNAPC2, SNAPC3, SNAPC4 and SNAPC5. SNAPC4 interacts with SNAPC1, SNAPC2, SNAPC5, BRF2 and TBP.

It is found in the nucleus. Functionally, part of the SNAPc complex required for the transcription of both RNA polymerase II and III small-nuclear RNA genes. Binds to the proximal sequence element (PSE), a non-TATA-box basal promoter element common to these 2 types of genes. Recruits TBP and BRF2 to the U6 snRNA TATA box. This chain is snRNA-activating protein complex subunit 4, found in Mus musculus (Mouse).